The chain runs to 462 residues: Argininosuccinate lyase (462 aa).

It belongs to the lyase 1 family. Argininosuccinate lyase subfamily.

It localises to the cytoplasm. It carries out the reaction 2-(N(omega)-L-arginino)succinate = fumarate + L-arginine. The protein operates within amino-acid biosynthesis; L-arginine biosynthesis; L-arginine from L-ornithine and carbamoyl phosphate: step 3/3. This chain is Argininosuccinate lyase, found in Bacillus cytotoxicus (strain DSM 22905 / CIP 110041 / 391-98 / NVH 391-98).